The sequence spans 178 residues: MSQENTSSIIVVGKLGAPYGIKGWLKVHSFTDDPAGIFDFSPWLIGQQGKWQTLEVVDWRRHNKGFIAKFAQVNDRDEAVAYTHAEISMDSAQLPELPQGEFYWRDLIGMSVVTDKGYDLGIVDDLMETGSNDVLVVKANSKDAFGQAERLIPFLTDTVIIEVKHDAREITVDWDPGF.

The PRC barrel domain occupies 99-178 (QGEFYWRDLI…EITVDWDPGF (80 aa)).

The protein belongs to the RimM family. Binds ribosomal protein uS19.

It localises to the cytoplasm. An accessory protein needed during the final step in the assembly of 30S ribosomal subunit, possibly for assembly of the head region. Essential for efficient processing of 16S rRNA. May be needed both before and after RbfA during the maturation of 16S rRNA. It has affinity for free ribosomal 30S subunits but not for 70S ribosomes. This chain is Ribosome maturation factor RimM, found in Pseudoalteromonas translucida (strain TAC 125).